A 375-amino-acid polypeptide reads, in one-letter code: CC-adding tRNA nucleotidyltransferase (375 aa).

CTP is bound at residue 27–30 (GAVR). Residues Asp-40 and Asp-42 each coordinate Mg(2+). CTP contacts are provided by residues 95–96 (RD), Asn-100, 137–146 (DPLRMLRAPR), and Arg-177.

The protein belongs to the tRNA nucleotidyltransferase/poly(A) polymerase family. Mg(2+) serves as cofactor.

It catalyses the reaction a tRNA precursor + 2 CTP = a tRNA with a 3' CC end + 2 diphosphate. Its function is as follows. tRNA nucleotidyltransferase involved in the synthesis of the tRNA CCA terminus. Adds the two cytidine residues to tRNA. The sequence is that of CC-adding tRNA nucleotidyltransferase from Halalkalibacterium halodurans (strain ATCC BAA-125 / DSM 18197 / FERM 7344 / JCM 9153 / C-125) (Bacillus halodurans).